A 308-amino-acid chain; its full sequence is Carbonic anhydrase 4 (308 aa).

Residues 1 to 18 (MQLLFALLALGALRPLAG) form the signal peptide. One can recognise an Alpha-carbonic anhydrase domain in the interval 21–281 (LHWCYEIQAS…LGDRSVFKSQ (261 aa)). 2 disulfides stabilise this stretch: Cys-24-Cys-34 and Cys-44-Cys-225. Residue Asn-31 is glycosylated (N-linked (GlcNAc...) asparagine). The active-site Proton donor/acceptor is the His-86. The Zn(2+) site is built by His-113, His-115, and His-138. Residue Asn-192 is glycosylated (N-linked (GlcNAc...) asparagine). Residue 221 to 222 (TT) coordinates substrate. A lipid anchor (GPI-anchor amidated serine) is attached at Ser-280. A propeptide spans 281-308 (QAAGQLLPLPLPTLLVPTLACVMAGLLR) (removed in mature form).

It belongs to the alpha-carbonic anhydrase family. Interacts with SLC4A4. The cofactor is Zn(2+).

It localises to the cell membrane. It carries out the reaction hydrogencarbonate + H(+) = CO2 + H2O. Its activity is regulated as follows. Inhibited by acetazolamide. Catalyzes the reversible hydration of carbon dioxide into bicarbonate and protons and thus is essential to maintaining intracellular and extracellular pH. May stimulate the sodium/bicarbonate transporter activity of SLC4A4 that acts in pH homeostasis. It is essential for acid overload removal from the retina and retina epithelium, and acid release in the choriocapillaris in the choroid. The polypeptide is Carbonic anhydrase 4 (CA4) (Oryctolagus cuniculus (Rabbit)).